A 281-amino-acid polypeptide reads, in one-letter code: Tetraspanin-5 (281 aa).

Residues 1-7 (MNRMSNT) lie on the Cytoplasmic side of the membrane. Residues 8–28 (VIGFLNILTLISSIVLLGSAL) form a helical membrane-spanning segment. Residues 29–44 (WMGRSKTTCEHFLQKP) are Extracellular-facing. A helical membrane pass occupies residues 45-65 (LLILGLAILILSVAGLVGACC). The Cytoplasmic portion of the chain corresponds to 66–74 (DVAWVLWVY). The chain crosses the membrane as a helical span at residues 75–95 (LFFMVFIIVALMGLTLFGFIV). At 96 to 221 (TSHSGGVVVD…TVRRDWHKLS (126 aa)) the chain is on the extracellular side. Residues 222 to 242 (LVNVIVVIFLIAVYCVGCCAF) traverse the membrane as a helical segment. The Cytoplasmic segment spans residues 243-281 (KNAKRPQHYGFPYGRYGMSKSRPGWEQSWSRWWHGRDRY).

Belongs to the tetraspanin (TM4SF) family.

The protein localises to the membrane. May be involved in the regulation of cell differentiation. In Arabidopsis thaliana (Mouse-ear cress), this protein is Tetraspanin-5 (TET5).